The chain runs to 1475 residues: Protein Shroom4 (1475 aa).

Residues 10–92 (YVPVQLQGGA…ILKLIVRRRN (83 aa)) enclose the PDZ domain. Disordered regions lie at residues 151 to 175 (EKSSSIGSMESLEQPGQPTYEGHLL) and 202 to 321 (CALS…PPRS). Polar residues predominate over residues 249 to 258 (TSTSHASSYS). Positions 294–312 (EQHRASEPVDSLPQKEKPG) are enriched in basic and acidic residues. Residue serine 412 is modified to Phosphoserine. 4 disordered regions span residues 432-523 (SKGM…PSAT), 542-577 (HTEASEEGDNEPKECGRLGGRRSGGPRGRSIQNRRR), 610-644 (NEAVEETQEPPESPPLSASNASLLPSYKNVPSPGD), and 658-688 (SECLSQASESSKARGGVEGRMSPGQRSGQSS). The segment covering 471-485 (QTRKERKTTPLDDKL) has biased composition (basic and acidic residues). Residues 513–523 (SDLTSQQPSAT) show a composition bias toward polar residues. Over residues 542-557 (HTEASEEGDNEPKECG) the composition is skewed to basic and acidic residues. Positions 558–568 (RLGGRRSGGPR) are enriched in gly residues. Low complexity-rich tracts occupy residues 624–635 (PLSASNASLLPS) and 658–667 (SECLSQASES). Residue serine 722 is modified to Phosphoserine. 2 stretches are compositionally biased toward polar residues: residues 727-738 (AQPQVALSTEAP) and 775-791 (KSLSTSHLPGLTTHNNK). Disordered regions lie at residues 727–753 (AQPQVALSTEAPSNPDDSKELKTSTPQ) and 772–791 (ESSKSLSTSHLPGLTTHNNK). At serine 1010 the chain carries Phosphoserine. Disordered regions lie at residues 1022 to 1041 (SNKPEESSVYEDENSVASMP) and 1055 to 1185 (SLEP…QSLQ). The span at 1090–1099 (FPPPRPPPPN) shows a compositional bias: pro residues. Over residues 1110 to 1125 (QLQQQQQQQQQQQQQQ) the composition is skewed to low complexity. A compositionally biased stretch (acidic residues) spans 1128–1145 (EEEEEKEQEEEGEKEEDL). Residues 1149–1168 (YFSSELTGSCAPNTEEQPQS) show a composition bias toward polar residues. The 280-residue stretch at 1190–1469 (FALHPSNFVP…QLKCLKESLH (280 aa)) folds into the ASD2 domain. Residues 1380 to 1470 (SESNQEKLVL…LKCLKESLHL (91 aa)) are a coiled coil.

It belongs to the shroom family. Interacts directly with F-actin. Detected in most adult tissues examined. Expressed in brain, lung, heart, liver, kidney, muscle and ovary. Expressed throughout the brain, with high expression in the brain stem and cerebellum and weaker expression in the hypothalamus, the hippocampus and the olfactory bulb. Expressed in wide range of cell types during development, including vascular endothelium and the polarized epithelium of the neural tube and kidney.

Its subcellular location is the cytoplasm. The protein localises to the cytoskeleton. Probable regulator of cytoskeletal architecture that plays an important role in development. May regulate cellular and cytoskeletal architecture by modulating the spatial distribution of myosin II. This is Protein Shroom4 (Shroom4) from Mus musculus (Mouse).